Consider the following 519-residue polypeptide: Anthranilate synthase component 1 (519 aa).

L-tryptophan is bound by residues serine 39 and 290-292; that span reads PYM. 327 to 328 contacts chorismate; it reads GT. Glutamate 360 lines the Mg(2+) pocket. Chorismate contacts are provided by residues tyrosine 448, arginine 468, 482–484, and glycine 484; that span reads GAG. Residue glutamate 497 participates in Mg(2+) binding.

It belongs to the anthranilate synthase component I family. In terms of assembly, heterotetramer consisting of two non-identical subunits: a beta subunit (TrpG) and a large alpha subunit (TrpE). Mg(2+) serves as cofactor.

The catalysed reaction is chorismate + L-glutamine = anthranilate + pyruvate + L-glutamate + H(+). The protein operates within amino-acid biosynthesis; L-tryptophan biosynthesis; L-tryptophan from chorismate: step 1/5. Feedback inhibited by tryptophan. Its function is as follows. Part of a heterotetrameric complex that catalyzes the two-step biosynthesis of anthranilate, an intermediate in the biosynthesis of L-tryptophan. In the first step, the glutamine-binding beta subunit (TrpG) of anthranilate synthase (AS) provides the glutamine amidotransferase activity which generates ammonia as a substrate that, along with chorismate, is used in the second step, catalyzed by the large alpha subunit of AS (TrpE) to produce anthranilate. In the absence of TrpG, TrpE can synthesize anthranilate directly from chorismate and high concentrations of ammonia. This is Anthranilate synthase component 1 (trpE) from Serratia marcescens.